The sequence spans 226 residues: Large ribosomal subunit protein uL1 (226 aa).

It belongs to the universal ribosomal protein uL1 family. As to quaternary structure, part of the 50S ribosomal subunit.

Binds directly to 23S rRNA. The L1 stalk is quite mobile in the ribosome, and is involved in E site tRNA release. Its function is as follows. Protein L1 is also a translational repressor protein, it controls the translation of the L11 operon by binding to its mRNA. This is Large ribosomal subunit protein uL1 from Borreliella burgdorferi (strain ZS7) (Borrelia burgdorferi).